A 172-amino-acid chain; its full sequence is MSQRPNPSALIWLLLSALVVGLDQWSKAWVLSSLPEYTPVPVIDGFWNWYRTYNTGAAFSFLSDAGGWQLWFFTALAVGISGLLAFWLSRTARGQWRSALPYALVIGGAIGNVIDRLMHGHVVDFIQWYIGSHTWPSFNIADSAIVGGAIGIAVFGLFDKSDKQQPGTGNLR.

The next 3 helical transmembrane spans lie at 10-30 (LIWL…KAWV), 68-88 (WQLW…AFWL), and 98-118 (SALP…DRLM). Active-site residues include Asp124 and Asp142. The helical transmembrane segment at 138–158 (FNIADSAIVGGAIGIAVFGLF) threads the bilayer.

Belongs to the peptidase A8 family.

The protein localises to the cell inner membrane. It catalyses the reaction Release of signal peptides from bacterial membrane prolipoproteins. Hydrolyzes -Xaa-Yaa-Zaa-|-(S,diacylglyceryl)Cys-, in which Xaa is hydrophobic (preferably Leu), and Yaa (Ala or Ser) and Zaa (Gly or Ala) have small, neutral side chains.. The protein operates within protein modification; lipoprotein biosynthesis (signal peptide cleavage). In terms of biological role, this protein specifically catalyzes the removal of signal peptides from prolipoproteins. The protein is Lipoprotein signal peptidase of Xanthomonas axonopodis pv. citri (strain 306).